The chain runs to 139 residues: Membrane protein YqfB (139 aa).

Residues 3–23 traverse the membrane as a helical segment; that stretch reads DLLTNPLIIAAIIGIISAIFG. Positions 25-87 are disordered; sequence KSKEEKQNSQ…TARNLKGLER (63 aa). Positions 62 to 97 form a coiled coil; sequence NRMEQARREAEERRRETARNLKGLERDLAAAKQKTV. Basic and acidic residues predominate over residues 65 to 87; that stretch reads EQARREAEERRRETARNLKGLER.

Its subcellular location is the cell membrane. This chain is Membrane protein YqfB (yqfB), found in Bacillus subtilis (strain 168).